The sequence spans 136 residues: Histone H2A (136 aa).

Gly residues predominate over residues 1–11 (MSSGGKSGGKA). The segment at 1–24 (MSSGGKSGGKAGDASSKAQSRSAK) is disordered. N6-acetyllysine is present on residues K6 and K10. The segment covering 12 to 24 (GDASSKAQSRSAK) has biased composition (low complexity). Position 108 is an N5-methylglutamine (Q108). Phosphoserine is present on S133. The [ST]-Q motif motif lies at 133 to 134 (SQ).

The protein belongs to the histone H2A family. The nucleosome is a histone octamer containing two molecules each of H2A, H2B, H3 and H4 assembled in one H3-H4 heterotetramer and two H2A-H2B heterodimers. The octamer wraps approximately 147 bp of DNA. Post-translationally, phosphorylated to form H2AS128ph (gamma-H2A) in response to DNA double-strand breaks (DSBs) generated by exogenous genotoxic agents and by stalled replication forks. Phosphorylation is dependent on the DNA damage checkpoint kinases MEC1/ATR and TEL1/ATM, spreads on either side of a detected DSB site and may mark the surrounding chromatin for recruitment of proteins required for DNA damage signaling and repair. Gamma-H2A is removed from the DNA prior to the strand invasion-primer extension step of the repair process and subsequently dephosphorylated. Dephosphorylation is necessary for efficient recovery from the DNA damage checkpoint. Acetylated by ESA1 to form H2AK4ac and H2AK7ac.

It is found in the nucleus. The protein localises to the chromosome. Its function is as follows. Core component of nucleosome which plays a central role in DNA double strand break (DSB) repair. Nucleosomes wrap and compact DNA into chromatin, limiting DNA accessibility to the cellular machineries which require DNA as a template. Histones thereby play a central role in transcription regulation, DNA repair, DNA replication and chromosomal stability. DNA accessibility is regulated via a complex set of post-translational modifications of histones, also called histone code, and nucleosome remodeling. This is Histone H2A (HTA1) from Mycosarcoma maydis (Corn smut fungus).